We begin with the raw amino-acid sequence, 31 residues long: Sarcolipin (31 aa).

Residues 1 to 7 (MERSTQE) are Cytoplasmic-facing. A helical membrane pass occupies residues 8 to 26 (LFINFTVVLITVLLMWLLV). At 27 to 31 (RSYQY) the chain is on the lumenal side.

This sequence belongs to the sarcolipin family. Homooligomer. Can also form heterooligomers with other sarcoplasmic/endoplasmic reticulum calcium ATPase (SERCA) regulators ARLN, ERLN, PLN and STRIT1/DWORF. Monomer. Interacts with calcium ATPase ATP2A1/SERCA1. Interacts as a monomer with ATP2A2/SERCA2; the interaction decreases ATP2A2 Ca(2+) affinity. Interacts with VMP1; VMP1 competes with PLN and SLN to prevent them from forming an inhibitory complex with ATP2A2.

Its subcellular location is the sarcoplasmic reticulum membrane. The protein localises to the endoplasmic reticulum membrane. Functionally, reversibly inhibits the activity of ATP2A1/SERCA1 and ATP2A2/SERCA2 in sarcoplasmic reticulum by decreasing the apparent affinity of the ATPase for Ca(2+). Also inhibits the activity of ATP2A3/SERCA3. Modulates calcium re-uptake during muscle relaxation and plays an important role in calcium homeostasis in muscle. Required for muscle-based, non-shivering thermogenesis. This is Sarcolipin (Sln) from Rattus norvegicus (Rat).